The sequence spans 262 residues: RNA-binding protein 7 (262 aa).

G2 carries the post-translational modification N-acetylglycine. The RRM domain occupies 10-87 (RTLFVGNLET…RPIKIQFRAG (78 aa)). ZCCHC8 binding regions lie at residues 25 to 35 (LLFELFHQAGP) and 59 to 76 (HEVS…IKLF). The tract at residues 95 to 121 (VSLSYPQHHVGNSSPTSTSPSRTVDNM) is disordered. A phosphoserine mark is found at S133 and S134. Omega-N-methylarginine is present on R149. 2 disordered regions span residues 159–212 (SPHL…HYSR) and 242–262 (SHDY…SSRH). A compositionally biased stretch (polar residues) spans 165 to 194 (SGFSPSAQSHNHTFNQSSSSQWRQDTPSSQ). S201 carries the phosphoserine modification. The span at 242 to 253 (SHDYDNRRDSGR) shows a compositional bias: basic and acidic residues.

Component of the nuclear exosome targeting (NEXT) complex composed of MTREX, ZCCHC8, and RBM7 that directs a subset of non-coding short-lived RNAs for exosomal degradation. Interacts with ZCCHC8 and SF3B2/SAP145. Binds to MTREX through ZCCHC8. Interacts with YWHAE and YWHAZ; these interactions are stress-dependent and RBM7 phosphorylation dependent; release RNA from the NEXT complex and may affect RNA targeting to the nuclear RNA exosomome for degradation. Interacts with MEPCE and LARP7, the core subunits of 7SK snRNP; upon genotoxic stress this interaction is enhanced, triggering the release of inactive P-TEFb complex from the core and P-TEFb complex activation. Phosphorylated at Ser-133 by MAPK14/p38-alpha-activated MAPKAPK2/MK2; this phosphorylation is stress-dependent; this phosphorylation decreases its RNA-binding capacity therefore affecting RNA nuclear exosome-mediated degradation. This phosphorylation mediates YWHAE and YWHAZ interactions.

Its subcellular location is the nucleus. The protein localises to the nucleoplasm. Its function is as follows. RNA-binding subunit of the trimeric nuclear exosome targeting (NEXT) complex, a complex that functions as an RNA exosome cofactor that directs a subset of non-coding short-lived RNAs for exosomal degradation. NEXT is involved in surveillance and turnover of aberrant transcripts and non-coding RNAs. Binds preferentially polyuridine sequences and associates with newly synthesized RNAs, including pre-mRNAs and short-lived exosome substrates such as promoter upstream transcripts (PROMPTs), enhancer RNAs (eRNAs), and 3'-extended products from small nuclear RNAs (snRNAs). Participates in several biological processes including DNA damage response (DDR) and stress response. During stress response, activation of the p38MAPK-MK2 pathway decreases RBM7-RNA-binding and subsequently the RNA exosome degradation activities, thereby modulating the turnover of non-coding transcriptome. Participates in DNA damage response (DDR), through its interaction with MEPCE and LARP7, the core subunits of 7SK snRNP complex, that release the positive transcription elongation factor b (P-TEFb) complex from the 7SK snRNP. In turn, activation of P-TEFb complex induces the transcription of P-TEFb-dependent DDR genes to promote cell viability. This chain is RNA-binding protein 7, found in Bos taurus (Bovine).